A 242-amino-acid chain; its full sequence is Carboxy-S-adenosyl-L-methionine synthase (242 aa).

S-adenosyl-L-methionine-binding positions include Y39, 64–66, 89–90, 117–118, N132, and R199; these read GCS, DN, and DI.

It belongs to the class I-like SAM-binding methyltransferase superfamily. Cx-SAM synthase family. In terms of assembly, homodimer.

It catalyses the reaction prephenate + S-adenosyl-L-methionine = carboxy-S-adenosyl-L-methionine + 3-phenylpyruvate + H2O. In terms of biological role, catalyzes the conversion of S-adenosyl-L-methionine (SAM) to carboxy-S-adenosyl-L-methionine (Cx-SAM). The protein is Carboxy-S-adenosyl-L-methionine synthase of Aliivibrio salmonicida (strain LFI1238) (Vibrio salmonicida (strain LFI1238)).